Consider the following 337-residue polypeptide: Probable E3 ubiquitin-protein ligase LUL1 (337 aa).

A lipid anchor (N-myristoyl glycine) is attached at Gly-2. The DAR2 domain stretch occupies residues 139 to 255 (FTFDASMPGR…GEIKIEVVKQ (117 aa)). The RING-type; atypical zinc finger occupies 285–324 (CVVCLSEPRDTTVLPCRHMCMCSGCAKALRFQTNLCPVCR).

The protein belongs to the RING-type zinc finger family. LOG2 subfamily. Post-translationally, myristoylated (in vitro).

It catalyses the reaction S-ubiquitinyl-[E2 ubiquitin-conjugating enzyme]-L-cysteine + [acceptor protein]-L-lysine = [E2 ubiquitin-conjugating enzyme]-L-cysteine + N(6)-ubiquitinyl-[acceptor protein]-L-lysine.. The protein operates within protein modification; protein ubiquitination. Acts as an E3 ubiquitin-protein ligase, or as part of E3 complex, which accepts ubiquitin from specific E2 ubiquitin-conjugating enzymes and then transfers it to substrates (in vitro). In Arabidopsis thaliana (Mouse-ear cress), this protein is Probable E3 ubiquitin-protein ligase LUL1 (LUL1).